The primary structure comprises 537 residues: Chaperonin GroEL 2 (537 aa).

Residues 29–32 (TLGP), 86–90 (DGTTT), Gly-413, 477–479 (NAA), and Asp-493 contribute to the ATP site.

The protein belongs to the chaperonin (HSP60) family. In terms of assembly, forms a cylinder of 14 subunits composed of two heptameric rings stacked back-to-back. Interacts with the co-chaperonin GroES.

The protein localises to the cytoplasm. The catalysed reaction is ATP + H2O + a folded polypeptide = ADP + phosphate + an unfolded polypeptide.. Its function is as follows. Together with its co-chaperonin GroES, plays an essential role in assisting protein folding. The GroEL-GroES system forms a nano-cage that allows encapsulation of the non-native substrate proteins and provides a physical environment optimized to promote and accelerate protein folding. This chain is Chaperonin GroEL 2, found in Rhodococcus jostii (strain RHA1).